The chain runs to 334 residues: Guanine nucleotide-binding protein subunit beta-like protein (334 aa).

WD repeat units lie at residues 14-55 (GHKD…DSEF), 65-104 (GHSK…SILL), 106-145 (GHGR…VLKM), 152-192 (MHRG…HLQT), 215-256 (DESK…QSFD), and 257-294 (AIVP…VIAS).

It belongs to the WD repeat G protein beta family.

In Encephalitozoon cuniculi (strain GB-M1) (Microsporidian parasite), this protein is Guanine nucleotide-binding protein subunit beta-like protein.